A 386-amino-acid chain; its full sequence is Patatin group M-1 (386 aa).

A signal peptide spans 1 to 23; it reads MATTKSFLILFFMILATTSSTCA. The PNPLA domain occupies 32-229; the sequence is LSIDGGGIKG…TVGDPALLSL (198 aa). Positions 36-41 match the GXGXXG motif; that stretch reads GGGIKG. Residues 75–79 carry the GXSXG motif; that stretch reads GTSTG. The Nucleophile role is filled by Ser77. Asn115 carries an N-linked (GlcNAc...) asparagine glycan. Asp215 serves as the catalytic Proton acceptor. The DGA/G motif lies at 215–217; sequence DGG.

This sequence belongs to the patatin family. As to expression, tuber.

It localises to the vacuole. In terms of biological role, probable lipolytic acyl hydrolase (LAH), an activity which is thought to be involved in the response of tubers to pathogens. The chain is Patatin group M-1 from Solanum tuberosum (Potato).